A 282-amino-acid chain; its full sequence is Pantothenate synthetase (282 aa).

Residue 30–37 (MGNLHQGH) coordinates ATP. H37 (proton donor) is an active-site residue. Q61 contacts (R)-pantoate. Q61 is a binding site for beta-alanine. 149 to 152 (GKKD) serves as a coordination point for ATP. Q155 lines the (R)-pantoate pocket. ATP-binding positions include I178 and 186 to 189 (MSSR).

This sequence belongs to the pantothenate synthetase family. As to quaternary structure, homodimer.

The protein localises to the cytoplasm. It carries out the reaction (R)-pantoate + beta-alanine + ATP = (R)-pantothenate + AMP + diphosphate + H(+). Its pathway is cofactor biosynthesis; (R)-pantothenate biosynthesis; (R)-pantothenate from (R)-pantoate and beta-alanine: step 1/1. Catalyzes the condensation of pantoate with beta-alanine in an ATP-dependent reaction via a pantoyl-adenylate intermediate. This is Pantothenate synthetase from Shewanella loihica (strain ATCC BAA-1088 / PV-4).